A 459-amino-acid polypeptide reads, in one-letter code: METVFEEMDEESTGGVSSSKEEIVLGQRLHLSFPFSIIFSTVLYCGEVAFGLYMFEIYRKANDTFWMSFTISFIIVGAILDQIILMFFNKDLRRNKAALLFWHILLLGPIVRCLHTIRNYHKWLKNLKQEKEETQVSITKRNTMLEREIAFSIRDNFMQQKAFKYMSVIQAFLGSVPQLILQMYISLTIREWPLNRALLMTFSLLSVTYGAIRCNILAIQISNDDTTIKLPPIEFFCVVMWRFLEVISRVVTLAFFIASLKLKSLPVLLIIYFVSLLAPWLEFWKSGAHLPGNKENNSNMVGTVLMLFLITLLYAAINFSCWSAVKLQLSDDKIIDGRQRWGHRILHYSFQFLENVIMILVFRFFGGKTLLNCCDSLIAVQLIISYLLATGFMLLFYQYLYPWQSGKVLPGRTENQPEAPYYYVNIEKTEKNKNKQLRNYCHSCNRVGYFSIRKSMTCS.

10 helical membrane passes run 35-55, 68-88, 97-117, 169-189, 199-219, 238-258, 264-284, 300-320, 345-365, and 377-397; these read FSII…LYMF, SFTI…LMFF, AALL…LHTI, IQAF…SLTI, LMTF…ILAI, VVMW…FFIA, SLPV…LEFW, MVGT…INFS, ILHY…FRFF, and LIAV…LLFY.

It belongs to the XK family. Expressed predominantly, if not exclusively, in testis.

The protein localises to the cell membrane. The sequence is that of XK-related protein 3 (XKR3) from Homo sapiens (Human).